Consider the following 554-residue polypeptide: MRSDAVKKGIERAPHRALFKAMGYTDEELERPLIGVVNSRNEIVPGHIHLDKIAEAVKAGIRMAGGTPVEFGAIGVCDGIAMGHTGMKYSLATRELIADSCEAMALAHSFDGMVFIPNCDKIVPGMLMAAARINVPAIVVSGGPMLSLRHNDKNLDLNSVFEAVGAYKAGKMTEKEVWEYEEKACPGCGSCSGMFTANSMNCLTEVLGMGLPGNGTVPAVYAERIRLAKKAGMKIVELVEKDIKPSDILTPKAFENALAVDMALGCSTNSVLHLPAIANEVGMEINLDIINEISSKVPNLCKLAPAGHHHVQDLYAAGGIPAVMKELSKKNLLHLDLITVTGKTVRENIENAKVRDYEVIRSIDNPYSPTGGIAVLRGNLAPDGAVVKRSAVAPEMLVHKGPARVFDSEDAAIEAIYNGKINKGDVVIIRYEGPKGGPGMREMLSPTSAIAGMGLDKDVALITDGRFSGATRGASIGHVSPEAMAGGPIAIVRDGDIISIDIPNGKLDVEIPDSEIQKRLKEWKAPAPKITKGYLGRYAKLVSSANKGAILENK.

Asp-78 lines the Mg(2+) pocket. [2Fe-2S] cluster is bound at residue Cys-119. Mg(2+)-binding residues include Asp-120 and Lys-121. Residue Lys-121 is modified to N6-carboxylysine. Cys-191 serves as a coordination point for [2Fe-2S] cluster. Glu-442 serves as a coordination point for Mg(2+). The Proton acceptor role is filled by Ser-468.

Belongs to the IlvD/Edd family. In terms of assembly, homodimer. Requires [2Fe-2S] cluster as cofactor. Mg(2+) serves as cofactor.

The catalysed reaction is (2R)-2,3-dihydroxy-3-methylbutanoate = 3-methyl-2-oxobutanoate + H2O. It catalyses the reaction (2R,3R)-2,3-dihydroxy-3-methylpentanoate = (S)-3-methyl-2-oxopentanoate + H2O. Its pathway is amino-acid biosynthesis; L-isoleucine biosynthesis; L-isoleucine from 2-oxobutanoate: step 3/4. The protein operates within amino-acid biosynthesis; L-valine biosynthesis; L-valine from pyruvate: step 3/4. Functionally, functions in the biosynthesis of branched-chain amino acids. Catalyzes the dehydration of (2R,3R)-2,3-dihydroxy-3-methylpentanoate (2,3-dihydroxy-3-methylvalerate) into 2-oxo-3-methylpentanoate (2-oxo-3-methylvalerate) and of (2R)-2,3-dihydroxy-3-methylbutanoate (2,3-dihydroxyisovalerate) into 2-oxo-3-methylbutanoate (2-oxoisovalerate), the penultimate precursor to L-isoleucine and L-valine, respectively. This Acetivibrio thermocellus (strain ATCC 27405 / DSM 1237 / JCM 9322 / NBRC 103400 / NCIMB 10682 / NRRL B-4536 / VPI 7372) (Clostridium thermocellum) protein is Dihydroxy-acid dehydratase.